The sequence spans 448 residues: Vicilin Cor a 11.0101 (448 aa).

Basic and acidic residues predominate over residues 1–44 (MLPKEDPELKKCKHKCRDERQFDEQQRRDGKQICEEKARERQQE). The disordered stretch occupies residues 1 to 66 (MLPKEDPELK…QEENPYVFQD (66 aa)). N47 carries an N-linked (GlcNAc...) asparagine glycan. 2 Cupin type-1 domains span residues 84–220 (ENFT…EQLE) and 263–418 (INLL…REVE). N-linked (GlcNAc...) asparagine glycosylation occurs at N301. Cu cation-binding residues include C333, H335, and H362.

This sequence belongs to the 7S seed storage protein family. In terms of assembly, homotrimer. Homohexamer. In terms of processing, N-glycosylated at Asn-301 mostly with xylosylated paucimannosidic-type N-glycan MMX (an N-linked glycan with beta-1,2-xylose residue in the structure) and also with MMXF (a complex N-linked glycan with alpha-1,3-fucose and beta-1,2-xylose residues in the structure). Post-translationally, a mixture of proteolytically processed and unprocessed subunits exist. Expressed in seed (at protein level). Expressed in seed.

Seed storage protein. Does not have superoxide dismutase (SOD) activity. This Corylus avellana (European hazel) protein is Vicilin Cor a 11.0101.